The chain runs to 341 residues: Trans-3-hydroxy-L-proline dehydratase (341 aa).

The active-site Proton acceptor is serine 90. Residues 91–92 (GS), aspartate 252, and 257–258 (GT) contribute to the substrate site.

Belongs to the proline racemase family.

It catalyses the reaction trans-3-hydroxy-L-proline = 1-pyrroline-2-carboxylate + H2O. Functionally, catalyzes the dehydration of trans-3-hydroxy-L-proline (t3LHyp) to Delta(1)-pyrroline-2-carboxylate (Pyr2C). May be involved in a degradation pathway of t3LHyp, which would allow L.aggregata to grow on t3LHyp as a sole carbon source. Displays neither proline racemase activity nor 4-hydroxyproline 2-epimerase activity. This chain is Trans-3-hydroxy-L-proline dehydratase, found in Roseibium aggregatum (strain ATCC 25650 / DSM 13394 / JCM 20685 / NBRC 16684 / NCIMB 2208 / IAM 12614 / B1) (Stappia aggregata).